Consider the following 285-residue polypeptide: Polyamine aminopropyltransferase (285 aa).

The region spanning 5–238 (EMWYETLHTG…GIMTFAWASD (234 aa)) is the PABS domain. An S-methyl-5'-thioadenosine-binding site is contributed by Q33. Spermidine is bound by residues H64 and D88. S-methyl-5'-thioadenosine contacts are provided by residues E108 and 140–141 (DG). D158 (proton acceptor) is an active-site residue. 158–161 (DCTD) is a spermidine binding site. An S-methyl-5'-thioadenosine-binding site is contributed by P165.

The protein belongs to the spermidine/spermine synthase family. In terms of assembly, homodimer or homotetramer.

The protein resides in the cytoplasm. It catalyses the reaction S-adenosyl 3-(methylsulfanyl)propylamine + putrescine = S-methyl-5'-thioadenosine + spermidine + H(+). It participates in amine and polyamine biosynthesis; spermidine biosynthesis; spermidine from putrescine: step 1/1. Its function is as follows. Catalyzes the irreversible transfer of a propylamine group from the amino donor S-adenosylmethioninamine (decarboxy-AdoMet) to putrescine (1,4-diaminobutane) to yield spermidine. In Erwinia tasmaniensis (strain DSM 17950 / CFBP 7177 / CIP 109463 / NCPPB 4357 / Et1/99), this protein is Polyamine aminopropyltransferase.